The sequence spans 629 residues: MGYNIGSYDVIVIGAGHAGCEAGLAAARMGSKTLMLTINLDMVAFMPCNPSVGGPAKGIVVREIDALGGEMGRNIDKTHIQMRMLNTGKGPAVRALRAQADKFAYQHELKKTIEETPNLTLFQGMVERLIVEEGVCKGVVTQAGAEYTAKTVVITTGTFLRGEIIMGDLKYSSGPNNQQPSITLSEHLEELGFDLVRFKTGTPPRVNSNTIDYSKTEIQPGDDKPRAFSFETTKFIMDQIPCWLTYTSTETHRLIDENLHRSAMYSGMIKGTGPRYCPSIEDKVVRFNDKPRHQIFLEPEGRNTQEVYVQGLSTSLPEDVQRDMLRTIPGLENVEMMRTGYAIEYDAIVPTQLWPTLETKKIKNLYTAGQINGTSGYEEAAGQGLMAGINAACRSLGKKEVVLGREDAYIGVLIDDLVTKGTNEPYRLLTSRAEYRLLLRHDNADLRLTEVGREIGLIKEERYERFTNKKLQIEQEKERLSSIIIKPRPEVQELIRNIGGSELKDGIRASDLLRRPEMAYEHIHLLVPSEVELSDEVKEQVEIQIKYEGYIEKSLQQVERMKKMESKKIPVDIDYDAISSLASEARQKLKDVRPLSMGQASRISGVNPADISILLVYIEQGKIARVSNQ.

Residues 14–19 (GAGHAG), valine 126, and serine 181 contribute to the FAD site. 273-287 (GPRYCPSIEDKVVRF) serves as a coordination point for NAD(+). Glutamine 370 serves as a coordination point for FAD.

The protein belongs to the MnmG family. In terms of assembly, homodimer. Heterotetramer of two MnmE and two MnmG subunits. The cofactor is FAD.

It localises to the cytoplasm. Its function is as follows. NAD-binding protein involved in the addition of a carboxymethylaminomethyl (cmnm) group at the wobble position (U34) of certain tRNAs, forming tRNA-cmnm(5)s(2)U34. The protein is tRNA uridine 5-carboxymethylaminomethyl modification enzyme MnmG of Bacillus cereus (strain ATCC 14579 / DSM 31 / CCUG 7414 / JCM 2152 / NBRC 15305 / NCIMB 9373 / NCTC 2599 / NRRL B-3711).